A 206-amino-acid polypeptide reads, in one-letter code: MARYLGPKCKLSRREGCDLLLKSGVRDHKSKCKSEKLPGQHGDKKPRLNSYGIQLREKQKIRRLYGILEKQFRNYYKKAARQKGSTGENLMALLERRLDNVVYRMGFASTRAEARQLVAHKAILVNDKVVNVPSFLVNPGDTVSVRQKAKNQGRIQAALALSEQRAPCDWITVDTGSFKGTFSTAPTLMDLSSDYNVNLVVELYSK.

In terms of domain architecture, S4 RNA-binding spans 96 to 161 (RRLDNVVYRM…QGRIQAALAL (66 aa)).

This sequence belongs to the universal ribosomal protein uS4 family. In terms of assembly, part of the 30S ribosomal subunit. Contacts protein S5. The interaction surface between S4 and S5 is involved in control of translational fidelity.

Its function is as follows. One of the primary rRNA binding proteins, it binds directly to 16S rRNA where it nucleates assembly of the body of the 30S subunit. In terms of biological role, with S5 and S12 plays an important role in translational accuracy. This chain is Small ribosomal subunit protein uS4, found in Legionella pneumophila (strain Corby).